Here is a 268-residue protein sequence, read N- to C-terminus: Undecaprenyl-diphosphatase (268 aa).

7 consecutive transmembrane segments (helical) span residues 47–67 (FAIL…FFKL), 83–103 (FIIG…IAGK), 109–129 (LFDP…LLWV), 144–164 (YPLL…IPGV), 184–204 (AAEF…VYDF), 218–238 (LVAI…KAFL), and 246–266 (FVLF…ALAL).

Belongs to the UppP family.

Its subcellular location is the cell inner membrane. It carries out the reaction di-trans,octa-cis-undecaprenyl diphosphate + H2O = di-trans,octa-cis-undecaprenyl phosphate + phosphate + H(+). In terms of biological role, catalyzes the dephosphorylation of undecaprenyl diphosphate (UPP). Confers resistance to bacitracin. The sequence is that of Undecaprenyl-diphosphatase from Bradyrhizobium sp. (strain BTAi1 / ATCC BAA-1182).